The chain runs to 350 residues: Alcohol dehydrogenase 1 (350 aa).

Positions 46, 69, 100, 103, 106, 114, and 156 each coordinate Zn(2+). NAD(+)-binding positions include glycine 180–glycine 186, aspartate 204, lysine 209, valine 271–leucine 273, and arginine 343.

Belongs to the zinc-containing alcohol dehydrogenase family. In terms of assembly, homotetramer. The cofactor is Zn(2+).

The protein localises to the cytoplasm. The enzyme catalyses a primary alcohol + NAD(+) = an aldehyde + NADH + H(+). The catalysed reaction is a secondary alcohol + NAD(+) = a ketone + NADH + H(+). The polypeptide is Alcohol dehydrogenase 1 (ADH1) (Candida albicans (Yeast)).